Here is a 431-residue protein sequence, read N- to C-terminus: Enolase (431 aa).

Residue Q166 coordinates (2R)-2-phosphoglycerate. Catalysis depends on E208, which acts as the Proton donor. Mg(2+) contacts are provided by D245, E288, and D315. The (2R)-2-phosphoglycerate site is built by K340, R369, S370, and K391. K340 serves as the catalytic Proton acceptor.

This sequence belongs to the enolase family. Requires Mg(2+) as cofactor.

The protein localises to the cytoplasm. It is found in the secreted. Its subcellular location is the cell surface. The catalysed reaction is (2R)-2-phosphoglycerate = phosphoenolpyruvate + H2O. Its pathway is carbohydrate degradation; glycolysis; pyruvate from D-glyceraldehyde 3-phosphate: step 4/5. Catalyzes the reversible conversion of 2-phosphoglycerate (2-PG) into phosphoenolpyruvate (PEP). It is essential for the degradation of carbohydrates via glycolysis. This is Enolase from Clostridium perfringens (strain ATCC 13124 / DSM 756 / JCM 1290 / NCIMB 6125 / NCTC 8237 / Type A).